Reading from the N-terminus, the 479-residue chain is Ribulose bisphosphate carboxylase large chain (479 aa).

A propeptide spanning residues 1–2 is cleaved from the precursor; sequence MS. 2 residues coordinate substrate: asparagine 123 and threonine 173. Lysine 175 (proton acceptor) is an active-site residue. Position 177 (lysine 177) interacts with substrate. The Mg(2+) site is built by lysine 201, aspartate 203, and glutamate 204. Lysine 201 bears the N6-carboxylysine mark. A Phosphoserine modification is found at serine 208. Histidine 294 (proton acceptor) is an active-site residue. Residues arginine 295 and histidine 327 each coordinate substrate. Residue threonine 330 is modified to Phosphothreonine. Serine 379 provides a ligand contact to substrate.

This sequence belongs to the RuBisCO large chain family. Type I subfamily. In terms of assembly, heterohexadecamer of 8 large chains and 8 small chains; disulfide-linked. The disulfide link is formed within the large subunit homodimers. It depends on Mg(2+) as a cofactor. The disulfide bond which can form in the large chain dimeric partners within the hexadecamer appears to be associated with oxidative stress and protein turnover.

It localises to the plastid. The protein localises to the chloroplast. The enzyme catalyses 2 (2R)-3-phosphoglycerate + 2 H(+) = D-ribulose 1,5-bisphosphate + CO2 + H2O. The catalysed reaction is D-ribulose 1,5-bisphosphate + O2 = 2-phosphoglycolate + (2R)-3-phosphoglycerate + 2 H(+). RuBisCO catalyzes two reactions: the carboxylation of D-ribulose 1,5-bisphosphate, the primary event in carbon dioxide fixation, as well as the oxidative fragmentation of the pentose substrate in the photorespiration process. Both reactions occur simultaneously and in competition at the same active site. The sequence is that of Ribulose bisphosphate carboxylase large chain from Draba nemorosa (Woodland whitlowgrass).